A 423-amino-acid polypeptide reads, in one-letter code: Mannose-6-phosphate isomerase (423 aa).

Position 2 is an N-acetylalanine (Ala-2). Phosphoserine occurs at positions 102 and 108. Residues Gln-110, His-112, Glu-137, and His-276 each contribute to the Zn(2+) site. Arg-295 is a catalytic residue.

It belongs to the mannose-6-phosphate isomerase type 1 family. Zn(2+) serves as cofactor.

The protein localises to the cytoplasm. It carries out the reaction D-mannose 6-phosphate = D-fructose 6-phosphate. It participates in nucleotide-sugar biosynthesis; GDP-alpha-D-mannose biosynthesis; alpha-D-mannose 1-phosphate from D-fructose 6-phosphate: step 1/2. Its function is as follows. Isomerase that catalyzes the interconversion of fructose-6-P and mannose-6-P and has a critical role in the supply of D-mannose derivatives required for many eukaryotic glycosylation reactions. This chain is Mannose-6-phosphate isomerase (MPI), found in Bos taurus (Bovine).